The primary structure comprises 323 residues: Beta-ketoacyl-[acyl-carrier-protein] synthase III (323 aa).

Active-site residues include Cys114 and His250. The tract at residues 251 to 255 (QANIR) is ACP-binding. Asn280 is a catalytic residue.

The protein belongs to the thiolase-like superfamily. FabH family. In terms of assembly, homodimer.

Its subcellular location is the cytoplasm. It catalyses the reaction malonyl-[ACP] + acetyl-CoA + H(+) = 3-oxobutanoyl-[ACP] + CO2 + CoA. It functions in the pathway lipid metabolism; fatty acid biosynthesis. Functionally, catalyzes the condensation reaction of fatty acid synthesis by the addition to an acyl acceptor of two carbons from malonyl-ACP. Catalyzes the first condensation reaction which initiates fatty acid synthesis and may therefore play a role in governing the total rate of fatty acid production. Possesses both acetoacetyl-ACP synthase and acetyl transacylase activities. Its substrate specificity determines the biosynthesis of branched-chain and/or straight-chain of fatty acids. In Ruegeria pomeroyi (strain ATCC 700808 / DSM 15171 / DSS-3) (Silicibacter pomeroyi), this protein is Beta-ketoacyl-[acyl-carrier-protein] synthase III.